Here is a 373-residue protein sequence, read N- to C-terminus: MEYQLTLNWPDFLERHWQKRPVVLKRGFNNFIDPISPDELAGLAMESEVDSRLVSHQDGKWQVSHGPFESYDHLGETNWSLLVQAVNHWHEPTAALMRPFRELPDWRIDDLMISFSVPGGGVGPHLDQYDVFIIQGTGRRRWRVGEKLQMKQHCPHPDLLQVDPFEAIIDEELEPGDILYIPPGFPHEGYALENAMNYSVGFRAPNTRELISGFADYVLQRELGGNYYSDPDVPPRAHPADVLPQEMDKLREMMLELINQPEHFKQWFGEFISQSRHELDIAPPEPPYQPDEIYDALKQGEVLVRLGGLRVLRIGDDVYANGEKIDSPHRPALDALASNIALTAENFGDALEDPSFLAMLAALVNSGYWFFEG.

One can recognise a JmjC domain in the interval 92 to 219 (PTAALMRPFR…LISGFADYVL (128 aa)). Substrate contacts are provided by residues Ser114, 125-127 (HLD), Arg140, and His187. 2 residues coordinate Fe cation: His125 and Asp127. Fe cation is bound at residue His187.

Belongs to the ROX family. RoxA/YcfD subfamily. Homodimer. The cofactor is Fe(2+).

The catalysed reaction is L-arginyl-[ribosomal protein uL16] + 2-oxoglutarate + O2 = (3R)-3-hydroxy-L-arginyl-[ribosomal protein uL16] + succinate + CO2. Functionally, growth-regulating oxygenase that catalyzes the hydroxylation of ribosomal protein uL16 on 'Arg-81'. The sequence is that of Ribosomal protein uL16 3-hydroxylase (roxA) from Escherichia coli (strain K12).